Here is a 319-residue protein sequence, read N- to C-terminus: CD2 antigen cytoplasmic tail-binding protein 2 homolog (319 aa).

Disordered regions lie at residues 1–57 (MASK…EDDV) and 105–124 (NAFD…KNEP). The span at 12–24 (KVKEESFKKHTLD) shows a compositional bias: basic and acidic residues. 2 positions are modified to phosphoserine: Ser-25 and Ser-30. Over residues 25 to 47 (SDEEDSDDYEREYLNDSDIEGGE) the composition is skewed to acidic residues. Position 37 is a phosphotyrosine (Tyr-37). A Phosphoserine modification is found at Ser-41. Basic and acidic residues predominate over residues 109–124 (PAKDEENSSDEEKNEP). The GYF domain maps to 260–316 (EVTWEFKWSQDETDIQGPFSTEKMLKWSQENYFKNGVYVRKCGENTNFYTSNRIDFD).

It localises to the nucleus. Its function is as follows. Required for embryonic epithelial tissue repair, but not for the assembly of the actomyosin cable at the wound edge. Probably acts downstream of rl in the regulation of Ddc and msn transcription to promote wound healing. In Drosophila melanogaster (Fruit fly), this protein is CD2 antigen cytoplasmic tail-binding protein 2 homolog (holn1).